The following is a 438-amino-acid chain: GDP-mannose 6-dehydrogenase (438 aa).

Residues Tyr10, Val11, Asp30, Lys35, Thr86, and Thr124 each coordinate NAD(+). The GDP-alpha-D-mannuronate site is built by Glu161, Lys210, Asn214, His217, Asn225, Tyr256, Tyr257, Arg259, Phe262, and Gly265. Cys268 is a catalytic residue. Lys271 is a binding site for NAD(+). Position 324 (Lys324) interacts with GDP-alpha-D-mannuronate. An NAD(+)-binding site is contributed by Arg331.

Belongs to the UDP-glucose/GDP-mannose dehydrogenase family.

The enzyme catalyses GDP-alpha-D-mannose + 2 NAD(+) + H2O = GDP-alpha-D-mannuronate + 2 NADH + 3 H(+). The protein operates within glycan biosynthesis; alginate biosynthesis. In terms of biological role, catalyzes the oxidation of guanosine diphospho-D-mannose (GDP-D-mannose) to GDP-D-mannuronic acid, a precursor for alginate polymerization. The alginate layer causes a mucoid phenotype and provides a protective barrier against host immune defenses and antibiotics. The protein is GDP-mannose 6-dehydrogenase (algD) of Pseudomonas syringae pv. syringae.